Reading from the N-terminus, the 136-residue chain is ATP synthase epsilon chain (136 aa).

It belongs to the ATPase epsilon chain family. In terms of assembly, F-type ATPases have 2 components, CF(1) - the catalytic core - and CF(0) - the membrane proton channel. CF(1) has five subunits: alpha(3), beta(3), gamma(1), delta(1), epsilon(1). CF(0) has three main subunits: a, b and c.

The protein localises to the cell membrane. Its function is as follows. Produces ATP from ADP in the presence of a proton gradient across the membrane. This chain is ATP synthase epsilon chain, found in Herpetosiphon aurantiacus (strain ATCC 23779 / DSM 785 / 114-95).